The sequence spans 229 residues: Small ribosomal subunit protein uS2c (229 aa).

It belongs to the universal ribosomal protein uS2 family.

Its subcellular location is the plastid. It is found in the chloroplast. The protein is Small ribosomal subunit protein uS2c (rps2) of Emiliania huxleyi (Coccolithophore).